Consider the following 609-residue polypeptide: Probable translation initiation factor IF-2 (609 aa).

The tr-type G domain occupies 12-230 (LRQPIVAVLG…VLAGLAQRYM (219 aa)). A G1 region spans residues 21–28 (GHVDHGKT). 21-28 (GHVDHGKT) is a binding site for GTP. The segment at 46–50 (QITQH) is G2. The G3 stretch occupies residues 86 to 89 (DTPG). GTP is bound by residues 86–90 (DTPGH) and 140–143 (NKID). Residues 140-143 (NKID) are G4. The tract at residues 208–210 (SAK) is G5.

The protein belongs to the TRAFAC class translation factor GTPase superfamily. Classic translation factor GTPase family. IF-2 subfamily.

Functionally, function in general translation initiation by promoting the binding of the formylmethionine-tRNA to ribosomes. Seems to function along with eIF-2. This is Probable translation initiation factor IF-2 from Ignicoccus hospitalis (strain KIN4/I / DSM 18386 / JCM 14125).